The sequence spans 248 residues: Probable transcriptional regulatory protein Pfl01_4410 (248 aa).

It belongs to the TACO1 family.

It localises to the cytoplasm. In Pseudomonas fluorescens (strain Pf0-1), this protein is Probable transcriptional regulatory protein Pfl01_4410.